An 87-amino-acid chain; its full sequence is Small ribosomal subunit protein bS20 (87 aa).

Residues 1–11 (MAHHKSAIKRI) are compositionally biased toward basic residues. The tract at residues 1 to 26 (MAHHKSAIKRIKQNEKRNARNRHQKS) is disordered.

Belongs to the bacterial ribosomal protein bS20 family.

Binds directly to 16S ribosomal RNA. The protein is Small ribosomal subunit protein bS20 of Trichlorobacter lovleyi (strain ATCC BAA-1151 / DSM 17278 / SZ) (Geobacter lovleyi).